A 508-amino-acid chain; its full sequence is Photosystem II CP47 reaction center protein (508 aa).

The next 6 membrane-spanning stretches (helical) occupy residues 21–36 (SVHI…WAGS), 101–115 (IVFS…IWHW), 140–156 (GIHL…FGAF), 203–218 (IAAG…FHLS), 237–252 (VLSS…AFVV), and 457–472 (TFAL…HGAR).

Belongs to the PsbB/PsbC family. PsbB subfamily. In terms of assembly, PSII is composed of 1 copy each of membrane proteins PsbA, PsbB, PsbC, PsbD, PsbE, PsbF, PsbH, PsbI, PsbJ, PsbK, PsbL, PsbM, PsbT, PsbX, PsbY, PsbZ, Psb30/Ycf12, at least 3 peripheral proteins of the oxygen-evolving complex and a large number of cofactors. It forms dimeric complexes. The cofactor is Binds multiple chlorophylls. PSII binds additional chlorophylls, carotenoids and specific lipids..

It localises to the plastid. Its subcellular location is the chloroplast thylakoid membrane. Its function is as follows. One of the components of the core complex of photosystem II (PSII). It binds chlorophyll and helps catalyze the primary light-induced photochemical processes of PSII. PSII is a light-driven water:plastoquinone oxidoreductase, using light energy to abstract electrons from H(2)O, generating O(2) and a proton gradient subsequently used for ATP formation. The sequence is that of Photosystem II CP47 reaction center protein from Calycanthus floridus var. glaucus (Eastern sweetshrub).